Reading from the N-terminus, the 520-residue chain is Protein FAM124A (520 aa).

Disordered regions lie at residues 1–34 (MDRKAGEDDWEDSGAETGGSDYSRLSSTSSELSV) and 311–334 (FKSGKHKGRAGNGQVQHFGGSQMD). Positions 20 to 32 (SDYSRLSSTSSEL) are enriched in low complexity.

The protein belongs to the FAM124 family.

This chain is Protein FAM124A (fam124a), found in Xenopus laevis (African clawed frog).